We begin with the raw amino-acid sequence, 200 residues long: Potassium-transporting ATPase KdpC subunit (200 aa).

The chain crosses the membrane as a helical span at residues 6–26 (PAVVLLILLTLITGIAYPLLT).

This sequence belongs to the KdpC family. In terms of assembly, the system is composed of three essential subunits: KdpA, KdpB and KdpC.

The protein localises to the cell inner membrane. Part of the high-affinity ATP-driven potassium transport (or Kdp) system, which catalyzes the hydrolysis of ATP coupled with the electrogenic transport of potassium into the cytoplasm. This subunit acts as a catalytic chaperone that increases the ATP-binding affinity of the ATP-hydrolyzing subunit KdpB by the formation of a transient KdpB/KdpC/ATP ternary complex. This Yersinia enterocolitica serotype O:8 / biotype 1B (strain NCTC 13174 / 8081) protein is Potassium-transporting ATPase KdpC subunit.